A 1214-amino-acid chain; its full sequence is Delta-latroinsectotoxin-Lt1a (1214 aa).

The tract at residues 64 to 89 (IGSIPVIGEVVGIVTAPIAIVSHITS) is helix H2 is the probable transmembrane region of the tetrameric pore inserted in the target cell membrane. The interval 250–269 (ALYALFYGTQTYAAVMFFLL) is helix H8 is the probable transmembrane region of the tetrameric pore inserted in the target cell membrane. 15 ANK repeats span residues 464–497 (DIHRDLYDAALNINKLKAVDEATTLIEKGADIEA), 501–532 (NDRSAMHAVAYRGNNKIALRFLLKNQSIDIEL), 536–565 (NGFTPLHIAAEAGQAGFVKLLINHGADVNA), 570–600 (TNLTPLHLATRSGFSKTVRNLLESPNIKVNE), 604–633 (DGFTPLHTAVMSTYMVVDALLNHPDIDKNA), 637–666 (SGLTPFHLAIINESQEVAESLVESNADLNI), 670–699 (NHMAPIHFAASMGSIKMLRYLISIKDKVSI), 706–734 (NNWTPLHFAIYFKKEDAAKELLKQDDINL), 740–769 (GNLTVLHLAVSTGQINIIKELLKRGSNIEE), 773–802 (EGYTSLHIAAMRKEPEIAVVLIENGADIEA), 806–835 (DNLTPLHSAAKIGRKSTVLYLLEKGADIGA), 839–868 (DGSTALHLAVSGRKMKTVETLLNKGANLKE), 872–901 (NKYLPIHKAIINDDLDMVRLFLEKDPSLKD), 906–936 (EGRTSIMLIVQKLLLELYNYFINNYAETLDE), and 966–994 (VKPTILVTIKLMEYCLKKLREESGAPEGS). Positions 1020–1214 (IVKETNSRYL…IDVHQKMFLR (195 aa)) are cleaved as a propeptide — C-terminal domain cleavage is required for toxin activation.

The protein belongs to the cationic peptide 01 (latrotoxin) family. 04 (delta-latroinsectotoxin) subfamily. Homotetramer in membrane. As to expression, expressed by the venom gland.

It localises to the secreted. Its subcellular location is the target cell membrane. Insecticidal presynaptic neurotoxin that induces massive neurotransmitter release at insect (but not vertebrate) neuromuscular junctions. Native toxin forms cation-permeable pores (with high permeability to calcium) in lipid membranes locust muscle membrane and artificial lipid bilayers. May bind to insect neurexin-1 homolog, insect adhesion G protein-coupled receptor L1 homolog, and insect receptor-type tyrosine-protein phosphatase S homolog, and induces neurotransmitter exocytosis both by forming tetrameric pores in membranes and signaling via G protein-coupled receptor. Oligomerization is a process independent of divalent cations. In Latrodectus tredecimguttatus (Mediterranean black widow spider), this protein is Delta-latroinsectotoxin-Lt1a.